Here is a 110-residue protein sequence, read N- to C-terminus: Protein YcgL (110 aa).

The YcgL domain occupies 14–98 (MFCVIYRSSK…PPEDLLKQHL (85 aa)). Residues 87–110 (PPPPEDLLKQHLSSVGQNTSPADR) form a disordered region. Polar residues predominate over residues 97–110 (HLSSVGQNTSPADR).

The protein is Protein YcgL of Salmonella choleraesuis (strain SC-B67).